The chain runs to 237 residues: D-aminoacyl-tRNA deacylase (237 aa).

This sequence belongs to the DtdA deacylase family. Monomer. The cofactor is Zn(2+).

It carries out the reaction a D-aminoacyl-tRNA + H2O = a tRNA + a D-alpha-amino acid + H(+). It catalyses the reaction glycyl-tRNA(Ala) + H2O = tRNA(Ala) + glycine + H(+). Functionally, D-aminoacyl-tRNA deacylase with broad substrate specificity. By recycling D-aminoacyl-tRNA to D-amino acids and free tRNA molecules, this enzyme counteracts the toxicity associated with the formation of D-aminoacyl-tRNA entities in vivo. In Sulfurisphaera tokodaii (strain DSM 16993 / JCM 10545 / NBRC 100140 / 7) (Sulfolobus tokodaii), this protein is D-aminoacyl-tRNA deacylase.